The primary structure comprises 1387 residues: DNA-directed RNA polymerase subunit beta'' (1387 aa).

Residues C224, C295, C302, and C305 each coordinate Zn(2+).

This sequence belongs to the RNA polymerase beta' chain family. RpoC2 subfamily. In plastids the minimal PEP RNA polymerase catalytic core is composed of four subunits: alpha, beta, beta', and beta''. When a (nuclear-encoded) sigma factor is associated with the core the holoenzyme is formed, which can initiate transcription. The cofactor is Zn(2+).

The protein resides in the plastid. The protein localises to the chloroplast. It catalyses the reaction RNA(n) + a ribonucleoside 5'-triphosphate = RNA(n+1) + diphosphate. DNA-dependent RNA polymerase catalyzes the transcription of DNA into RNA using the four ribonucleoside triphosphates as substrates. In Panax ginseng (Korean ginseng), this protein is DNA-directed RNA polymerase subunit beta''.